The primary structure comprises 997 residues: Translation initiation factor IF-2 (997 aa).

Positions 36-415 (SMAGSLTTEE…ATQPLKAAKR (380 aa)) are disordered. Basic and acidic residues-rich tracts occupy residues 45–65 (EAAR…ERSG) and 94–107 (AREE…EKPA). A compositionally biased stretch (low complexity) spans 108 to 126 (AVEAPAQAEPVAEAPAASP). Basic and acidic residues predominate over residues 127 to 147 (HKVEEKAAPEAAKAEPAEKAK). The span at 151-162 (ARVVSAARVISR) shows a compositional bias: low complexity. Positions 163-181 (PGEEEEKKPEPVVESKPEP) are enriched in basic and acidic residues. The segment covering 182-196 (VAEISPVAAALAARE) has biased composition (low complexity). 2 stretches are compositionally biased toward basic and acidic residues: residues 197-214 (AAAR…EKGA) and 241-252 (PEARTEAWKDAD). The span at 300-309 (GRPGAPGGPR) shows a compositional bias: gly residues. The segment covering 316–335 (PPRPGGPRPSGPGGPRPAGG) has biased composition (pro residues). Basic and acidic residues predominate over residues 378-388 (GGRRDDDDSQR). Residues 390–399 (NRGKGRRKGG) are compositionally biased toward basic residues. The tr-type G domain maps to 496-665 (PRPPVVTIMG…ALQSEIMELK (170 aa)). The segment at 505–512 (GHVDHGKT) is G1. 505 to 512 (GHVDHGKT) contacts GTP. Residues 530–534 (GITQH) are G2. The G3 stretch occupies residues 551–554 (DTPG). Residues 551-555 (DTPGH) and 605-608 (NKMD) each bind GTP. The tract at residues 605–608 (NKMD) is G4. Residues 641 to 643 (AAK) are G5.

The protein belongs to the TRAFAC class translation factor GTPase superfamily. Classic translation factor GTPase family. IF-2 subfamily.

The protein localises to the cytoplasm. One of the essential components for the initiation of protein synthesis. Protects formylmethionyl-tRNA from spontaneous hydrolysis and promotes its binding to the 30S ribosomal subunits. Also involved in the hydrolysis of GTP during the formation of the 70S ribosomal complex. The sequence is that of Translation initiation factor IF-2 from Desulfovibrio desulfuricans (strain ATCC 27774 / DSM 6949 / MB).